Reading from the N-terminus, the 1138-residue chain is MNLNNLGGYEDSNRTLNNSLNYPTQKALSPSLKNMNYQDFLSITEREQPEALASGNTAINTVVSVTGATLSALGVPGASFITNFYLKITGLLWPHDKNIWDEFMTEVETLIEQKIEQYARNKALAELEGLGNNLTIYQQALEDWLNNPDDPATITRVIDRFRILDALFESYMPSFRVAGYEIPLLTVYAQAANLHLALLRDSTLYGDKWEFTQNNIEENYNRQKKHISEYSNHCVKWYNSGLSRLNGSTYEQWINYNRFRREMILMVLDIAAVFPIYDPRMYSMETSTQLTREVYTDPISLSISNPGIGPSFSQMENTAIRTPHLVDYLDELYIYTSKYKAFSHEIQPDLFYWSAHKVSFKQSEQSNLYTTGIYGKTSGYISSGAYSFRGNDIYRTLAAPSVVVYPYTQNYGVEQVEFYGVKGHVHYRGDNKYDLTYDSIDQLPPDGEPIHEKYTHRLCHATAISKSTPDYDNATIPIFSWTHRSAEYYNRIYPNKITKIPAVKMYKLGDTSTVVKGPGFTGGDLVKRGSNGYIGDIKATVNSPLSQNYRVRVRYATNVSGQFNVYINDKITLQRKFQNTVETIGEGKDLTYGSFGYIEYSTTIQFPDKHPKITLHLSDLSNNSSFYVDSIEFIPVDVNYDEKEKLEKAQKAVNTLFTEGRNALQKDVTDYKVDQVSILVDCISGDLYPNEKRELQNLVKYAKRLSYSRNLLLDPTFDSINSSEENGWYGSNGIVIGNGDFVFKGNYLIFSGTNDTQYPTYLYQKIDESKLKEYTRYKLKGFIESSQDLEAYVIRYDAKHRTLDVSDNLLPDILPENTCGEPNRCAAQQYLDENPSSECSSMQDGILSDSHSFSLNIDIGSINHNENLGIWVLFKISTLEGYAKFGNLEVIEDGPVIGEALARVKRQETKWRNKLAQLTTETQAIYTRAKQALDNLFANAQDSHLKIDVTFAEIAAARKIVQSIREAYMSWLSVVPGVNHPIFTELSERVQRAFQLYDVRNVVRNGRFLNGLSDWIVTSDVKVQEENGNNVLVLNNWDAQVLQNVKLYQDRGYILRVTARKIGIGEGYITITDEEGHTVQLRFTACEVIDASNAFISGYITKELEFFPDTEKVHIEIGETEGIFLVESIELFLMEELC.

This sequence belongs to the delta endotoxin family.

Functionally, promotes colloidosmotic lysis by binding to the midgut epithelial cells of Coleoptera. In Bacillus thuringiensis serovar kumamotoensis, this protein is Pesticidal crystal protein Cry7Ab (cry7Ab).